Reading from the N-terminus, the 251-residue chain is Demethylmenaquinone methyltransferase (251 aa).

S-adenosyl-L-methionine contacts are provided by residues Thr66, Asp87, and 115 to 116; that span reads NA.

It belongs to the class I-like SAM-binding methyltransferase superfamily. MenG/UbiE family.

The catalysed reaction is a 2-demethylmenaquinol + S-adenosyl-L-methionine = a menaquinol + S-adenosyl-L-homocysteine + H(+). It functions in the pathway quinol/quinone metabolism; menaquinone biosynthesis; menaquinol from 1,4-dihydroxy-2-naphthoate: step 2/2. Functionally, methyltransferase required for the conversion of demethylmenaquinol (DMKH2) to menaquinol (MKH2). This Symbiobacterium thermophilum (strain DSM 24528 / JCM 14929 / IAM 14863 / T) protein is Demethylmenaquinone methyltransferase.